A 696-amino-acid chain; its full sequence is Elongation factor G 2 (696 aa).

The tr-type G domain occupies 5–281; the sequence is SKYRNIGIFA…AVVDYLPSPT (277 aa). GTP-binding positions include 14–21, 78–82, and 132–135; these read AHVDAGKT, DTPGH, and NKLD.

It belongs to the TRAFAC class translation factor GTPase superfamily. Classic translation factor GTPase family. EF-G/EF-2 subfamily.

It localises to the cytoplasm. In terms of biological role, catalyzes the GTP-dependent ribosomal translocation step during translation elongation. During this step, the ribosome changes from the pre-translocational (PRE) to the post-translocational (POST) state as the newly formed A-site-bound peptidyl-tRNA and P-site-bound deacylated tRNA move to the P and E sites, respectively. Catalyzes the coordinated movement of the two tRNA molecules, the mRNA and conformational changes in the ribosome. This Vibrio parahaemolyticus serotype O3:K6 (strain RIMD 2210633) protein is Elongation factor G 2.